The following is a 280-amino-acid chain: MNSYLLAFKSGFGFLSTIPVGISMEGIDELMKKIYFYPVVGAVLGLLIGAVAFIGQVIFPGPVLAALLMGFIYYITGFNHLDGITDIGDGFMAHGSLEKKIKALKDTTIGTGGVSFCILLLLTLYGSIRAVQQEGSAVFGSNLPVLMFESMFIAEVSAKQSMLTIAAFGKPIPPREKQAYPGLGAMTINGATRKNFLIGFVFGAIVCFLPFGWIGLLPYLGACLVALVILNRSYAHFGGLNGDGIGTANEIGRVTALIILAVLLQLSLNGYMGGFKWTLL.

6 helical membrane-spanning segments follow: residues 4–24 (YLLA…GISM), 39–59 (VVGA…QVIF), 61–81 (GPVL…FNHL), 108–128 (TIGT…YGSI), 196–216 (FLIG…WIGL), and 255–275 (TALI…MGGF).

The protein belongs to the CobS family. The cofactor is Mg(2+).

The protein localises to the cell membrane. The catalysed reaction is alpha-ribazole + adenosylcob(III)inamide-GDP = adenosylcob(III)alamin + GMP + H(+). It carries out the reaction alpha-ribazole 5'-phosphate + adenosylcob(III)inamide-GDP = adenosylcob(III)alamin 5'-phosphate + GMP + H(+). It functions in the pathway cofactor biosynthesis; adenosylcobalamin biosynthesis; adenosylcobalamin from cob(II)yrinate a,c-diamide: step 7/7. Joins adenosylcobinamide-GDP and alpha-ribazole to generate adenosylcobalamin (Ado-cobalamin). Also synthesizes adenosylcobalamin 5'-phosphate from adenosylcobinamide-GDP and alpha-ribazole 5'-phosphate. This Methanosarcina barkeri (strain Fusaro / DSM 804) protein is Adenosylcobinamide-GDP ribazoletransferase.